The following is a 473-amino-acid chain: Probable transporter MCH2 (473 aa).

Over 1–37 (MSEERHEDHHRDVENKLNLNGKDDINGNTSISIEVPD) the chain is Cytoplasmic. The chain crosses the membrane as a helical span at residues 38–58 (GGYGWFILLAFILYNFSTWGA). The Extracellular segment spans residues 59-83 (NSGYAIYLAHYLENNTFAGGSKLDY). The N-linked (GlcNAc...) asparagine glycan is linked to Asn72. The chain crosses the membrane as a helical span at residues 84–105 (ASIGGLAFSCGLFFAPVITWLY). Residues 106–111 (HIFSIQ) lie on the Cytoplasmic side of the membrane. Residues 112 to 135 (FIIGLGILFQGAALLLAAFSVTLW) form a helical membrane-spanning segment. The Extracellular portion of the chain corresponds to 136–141 (EIYLTQ). Residues 142-163 (GVLIGFGLAFIFIPSVTLIPLW) form a helical membrane-spanning segment. Residues 164-169 (FRNKRS) are Cytoplasmic-facing. Residues 170–186 (LASGIGTAGSGLGGIVF) form a helical membrane-spanning segment. The Extracellular segment spans residues 187-200 (NLGMQSILQKRGVK). Residues 201–220 (WALIAQCIICTSLSTIALML) form a helical membrane-spanning segment. Topologically, residues 221 to 243 (TRTTHQGLRQHKRSYKFELLDYD) are cytoplasmic. A helical membrane pass occupies residues 244–268 (VLSNFAVWLLFGFVSFAMLGYVVLL). Topologically, residues 269 to 286 (YSLSDFTVSLGYTSKQGS) are extracellular. The chain crosses the membrane as a helical span at residues 287–304 (YVSCMVSVGSLLGRPIVG). Residues 305-312 (HIADKYGS) are Cytoplasmic-facing. A helical membrane pass occupies residues 313–332 (LTVGMILHLVMAILCWAMWI). The Extracellular portion of the chain corresponds to 333–342 (PCKNLATAIA). A helical membrane pass occupies residues 343–362 (FGLLVGSIMGTIWPTIASIV). The Cytoplasmic segment spans residues 363 to 370 (TRIVGLQK). A helical transmembrane segment spans residues 371–394 (LPGTFGSTWIFMAAFALVAPIIGL). At 395 to 408 (ELRSTDTNGNDYYR) the chain is on the extracellular side. The helical transmembrane segment at 409-433 (TAIFVGFAYFGVSLCQWLLRGFIIA) threads the bilayer. At 434–473 (RDEIAVREAYSADQNELHLNVKLSHMSKCLFRYKQLPRRV) the chain is on the cytoplasmic side.

Belongs to the major facilitator superfamily. Monocarboxylate porter (TC 2.A.1.13) family.

It is found in the membrane. Probable transporter. Does not act in the transport of monocarboxylic acids across the plasma membrane. This is Probable transporter MCH2 (MCH2) from Saccharomyces cerevisiae (strain ATCC 204508 / S288c) (Baker's yeast).